Consider the following 504-residue polypeptide: Anaerobic nitric oxide reductase transcription regulator NorR (504 aa).

A 4-aspartylphosphate modification is found at D57. In terms of domain architecture, Sigma-54 factor interaction spans 187-416; that stretch reads MIGLSPGMTQ…LEHAIHRAVV (230 aa). Residues 215–222 and 278–287 each bind ATP; these read GETGTGKE and ADNGTLFLDE. Residues 479 to 498 constitute a DNA-binding region (H-T-H motif); that stretch reads WAACARMLETDVANLHRLAK.

The protein operates within nitrogen metabolism; nitric oxide reduction. Functionally, required for the expression of anaerobic nitric oxide (NO) reductase, acts as a transcriptional activator for at least the norVW operon. Activation also requires sigma-54. The sequence is that of Anaerobic nitric oxide reductase transcription regulator NorR from Escherichia coli O6:K15:H31 (strain 536 / UPEC).